A 90-amino-acid polypeptide reads, in one-letter code: DNA-binding protein HU-alpha (90 aa).

The protein belongs to the bacterial histone-like protein family. Heterodimer of an alpha and a beta chain.

Functionally, histone-like DNA-binding protein which is capable of wrapping DNA to stabilize it, and thus to prevent its denaturation under extreme environmental conditions. The sequence is that of DNA-binding protein HU-alpha (hupA) from Vibrio proteolyticus (Aeromonas proteolytica).